The chain runs to 242 residues: Type III pantothenate kinase (242 aa).

7-14 contacts ATP; that stretch reads DLGNSRFK. Residues Tyr-91 and 98-101 contribute to the substrate site; that span reads GVDR. The Proton acceptor role is filled by Asp-100. Position 121 (Thr-121) interacts with ATP. Thr-171 is a binding site for substrate.

It belongs to the type III pantothenate kinase family. Homodimer. NH4(+) is required as a cofactor. Requires K(+) as cofactor.

It localises to the cytoplasm. It carries out the reaction (R)-pantothenate + ATP = (R)-4'-phosphopantothenate + ADP + H(+). It participates in cofactor biosynthesis; coenzyme A biosynthesis; CoA from (R)-pantothenate: step 1/5. Catalyzes the phosphorylation of pantothenate (Pan), the first step in CoA biosynthesis. In Xanthomonas euvesicatoria pv. vesicatoria (strain 85-10) (Xanthomonas campestris pv. vesicatoria), this protein is Type III pantothenate kinase.